The primary structure comprises 422 residues: Probable sucrose-phosphatase 2 (422 aa).

Belongs to the sucrose phosphatase family. As to quaternary structure, homodimer. Requires Mg(2+) as cofactor.

It carries out the reaction sucrose 6(F)-phosphate + H2O = sucrose + phosphate. It functions in the pathway glycan biosynthesis; sucrose biosynthesis; sucrose from D-fructose 6-phosphate and UDP-alpha-D-glucose: step 2/2. Catalyzes the final step of sucrose synthesis. The protein is Probable sucrose-phosphatase 2 (SPP2) of Arabidopsis thaliana (Mouse-ear cress).